The chain runs to 82 residues: Small ribosomal subunit protein bS18 (82 aa).

Residues 1–20 (MVDINQIPTRRPFHRRRKTC) form a disordered region.

It belongs to the bacterial ribosomal protein bS18 family. Part of the 30S ribosomal subunit. Forms a tight heterodimer with protein bS6.

Binds as a heterodimer with protein bS6 to the central domain of the 16S rRNA, where it helps stabilize the platform of the 30S subunit. The polypeptide is Small ribosomal subunit protein bS18 (Mesorhizobium japonicum (strain LMG 29417 / CECT 9101 / MAFF 303099) (Mesorhizobium loti (strain MAFF 303099))).